Consider the following 325-residue polypeptide: Germination protease (325 aa).

The propeptide occupies 1–7; that stretch reads MYNVRTD.

The protein belongs to the peptidase A25 family. As to quaternary structure, homotetramer. Autoproteolytically processed. The inactive tetrameric zymogen termed p46 autoprocesses to a smaller form termed p41, which is active only during spore germination.

It carries out the reaction Endopeptidase action with P4 Glu or Asp, P1 preferably Glu &gt; Asp, P1' hydrophobic and P2' Ala.. Its function is as follows. Initiates the rapid degradation of small, acid-soluble proteins during spore germination. This Clostridium perfringens (strain ATCC 13124 / DSM 756 / JCM 1290 / NCIMB 6125 / NCTC 8237 / Type A) protein is Germination protease.